A 239-amino-acid chain; its full sequence is Small ribosomal subunit protein uS3c (239 aa).

The 97-residue stretch at Ile43 to Lys139 folds into the KH type-2 domain.

Belongs to the universal ribosomal protein uS3 family. Part of the 30S ribosomal subunit.

It localises to the plastid. The protein resides in the chloroplast. This Oryza nivara (Indian wild rice) protein is Small ribosomal subunit protein uS3c (rps3).